The primary structure comprises 986 residues: Ephrin type-A receptor 4 (986 aa).

An N-terminal signal peptide occupies residues 1–19; the sequence is MAGIFYFILFSFLFGICDA. At 20–547 the chain is on the extracellular side; it reads VTGSRVYPAN…RIIGDGANST (528 aa). Residues 30 to 209 enclose the Eph LBD domain; sequence EVTLLDSRSV…FYKKCPLTVR (180 aa). N-linked (GlcNAc...) asparagine glycans are attached at residues asparagine 235, asparagine 340, and asparagine 408. Fibronectin type-III domains are found at residues 328–439 and 440–537; these read PPSA…TNQA and APSS…TVPS. Residues 548–569 form a helical membrane-spanning segment; the sequence is VLLVSVSGSVVLVVILIAAFVI. The Cytoplasmic portion of the chain corresponds to 570 to 986; it reads SRRRSKYSKA…QQMHGRMVPV (417 aa). Phosphotyrosine; by autocatalysis occurs at positions 596 and 602. The region spanning 621-882 is the Protein kinase domain; the sequence is IKIEKVIGVG…QIVNMLDKLI (262 aa). ATP-binding positions include 627–635 and lysine 653; that span reads IGVGEFGEV. Aspartate 746 acts as the Proton acceptor in catalysis. Phosphotyrosine; by autocatalysis occurs at positions 779 and 928. In terms of domain architecture, SAM spans 911-975; that stretch reads SAVVSVGDWL…LSSVQAMRTQ (65 aa). The PDZ-binding signature appears at 984–986; the sequence is VPV.

The protein belongs to the protein kinase superfamily. Tyr protein kinase family. Ephrin receptor subfamily. As to quaternary structure, heterotetramer upon binding of the ligand. The heterotetramer is composed of an ephrin dimer and a receptor dimer. Oligomerization is probably required to induce biological responses. Interacts (phosphorylated at position Tyr-602) with FYN. Interacts (via PDZ motif) with SIPA1L1 (via PDZ domain); controls neuronal morphology through regulation of the RAP1 (RAP1A or RAP1B) and RAP2 (RAP2A, RAP2B or RAP2C) GTPases. Interacts with CDK5, CDK5R1 and NGEF; upon activation by EFNA1 induces NGEF phosphorylation by the kinase CDK5. Interacts with CHN1; effector of EPHA4 in axon guidance linking EPHA4 activation to RAC1 regulation. Forms a ternary complex composed of ADAM10, CADH1 and EPHA4; within the complex, CADH1 is cleaved by ADAM10 which disrupts adherens junctions. Expressed in inner and outer pillar cells of the organ of Corti (at protein level). Highest expression in the adult brain and retina and also detectable in kidney, lung, skeletal muscle and thymus. Not detected in heart and liver. Expressed in myogenic progenitor cells.

The protein resides in the cell membrane. It is found in the cell projection. Its subcellular location is the axon. The protein localises to the dendrite. It localises to the postsynaptic density membrane. The protein resides in the early endosome. It is found in the cell junction. Its subcellular location is the adherens junction. The enzyme catalyses L-tyrosyl-[protein] + ATP = O-phospho-L-tyrosyl-[protein] + ADP + H(+). Receptor tyrosine kinase which binds membrane-bound ephrin family ligands residing on adjacent cells, leading to contact-dependent bidirectional signaling into neighboring cells. The signaling pathway downstream of the receptor is referred to as forward signaling while the signaling pathway downstream of the ephrin ligand is referred to as reverse signaling. Highly promiscuous, it has the unique property among Eph receptors to bind and to be physiologically activated by both GPI-anchored ephrin-A and transmembrane ephrin-B ligands including EFNA1 and EFNB3. Upon activation by ephrin ligands, modulates cell morphology and integrin-dependent cell adhesion through regulation of the Rac, Rap and Rho GTPases activity. Plays an important role in the development of the nervous system controlling different steps of axonal guidance including the establishment of the corticospinal projections. May also control the segregation of motor and sensory axons during neuromuscular circuit developmen. In addition to its role in axonal guidance plays a role in synaptic plasticity. Activated by EFNA1 phosphorylates CDK5 at 'Tyr-15' which in turn phosphorylates NGEF regulating RHOA and dendritic spine morphogenesis. In the nervous system, also plays a role in repair after injury preventing axonal regeneration and in angiogenesis playing a role in central nervous system vascular formation. Additionally, its promiscuity makes it available to participate in a variety of cell-cell signaling regulating for instance the development of the thymic epithelium. During development of the cochlear organ of Corti, regulates pillar cell separation by forming a ternary complex with ADAM10 and CADH1 which facilitates the cleavage of CADH1 by ADAM10 and disruption of adherens junctions. Phosphorylates CAPRIN1, promoting CAPRIN1-dependent formation of a membraneless compartment. The protein is Ephrin type-A receptor 4 (Epha4) of Mus musculus (Mouse).